The chain runs to 96 residues: MF6 protein (96 aa).

The polypeptide is MF6 protein (Myxoma virus (strain Uriarra) (MYXV)).